Here is a 295-residue protein sequence, read N- to C-terminus: Sulfotransferase 1A1 (295 aa).

3'-phosphoadenylyl sulfate is bound at residue 48 to 53; the sequence is KSGTTW. 106-108 is a binding site for substrate; that stretch reads KTH. His108 functions as the Proton acceptor in the catalytic mechanism. Residues Arg130, Ser138, Tyr193, 227 to 232, and 255 to 259 each bind 3'-phosphoadenylyl sulfate; these read TSFKEM and FMRKG. A Phosphoserine modification is found at Ser138.

Belongs to the sulfotransferase 1 family. As to quaternary structure, homodimer.

It is found in the cytoplasm. The enzyme catalyses a phenol + 3'-phosphoadenylyl sulfate = an aryl sulfate + adenosine 3',5'-bisphosphate + H(+). It catalyses the reaction 17beta-estradiol + 3'-phosphoadenylyl sulfate = 17beta-estradiol 3-sulfate + adenosine 3',5'-bisphosphate + H(+). The catalysed reaction is 4-ethylphenol + 3'-phosphoadenylyl sulfate = 4-ethylphenyl sulfate + adenosine 3',5'-bisphosphate + H(+). It carries out the reaction 4-nitrophenol + 3'-phosphoadenylyl sulfate = 4-nitrophenyl sulfate + adenosine 3',5'-bisphosphate. The enzyme catalyses dopamine + 3'-phosphoadenylyl sulfate = dopamine 3-O-sulfate + adenosine 3',5'-bisphosphate + H(+). It catalyses the reaction dopamine + 3'-phosphoadenylyl sulfate = dopamine 4-O-sulfate + adenosine 3',5'-bisphosphate + H(+). The catalysed reaction is 3,3',5-triiodo-L-thyronine + 3'-phosphoadenylyl sulfate = 3,3',5-triiodo-L-thyronine sulfate + adenosine 3',5'-bisphosphate + H(+). It carries out the reaction 3,3',5'-triiodo-L-thyronine + 3'-phosphoadenylyl sulfate = 3,3',5'-triiodo-L-thyronine sulfate + adenosine 3',5'-bisphosphate + H(+). The enzyme catalyses 3,3'-diiodo-L-thyronine + 3'-phosphoadenylyl sulfate = 3,3'-diiodo-L-thyronine sulfate + adenosine 3',5'-bisphosphate + H(+). It catalyses the reaction L-thyroxine + 3'-phosphoadenylyl sulfate = L-thyroxine sulfate + adenosine 3',5'-bisphosphate + H(+). Sulfotransferase that utilizes 3'-phospho-5'-adenylyl sulfate (PAPS) as sulfonate donor to catalyze the sulfate conjugation of a wide variety of acceptor molecules bearing a hydroxyl or an amine group. Sulfonation increases the water solubility of most compounds, and therefore their renal excretion, but it can also result in bioactivation to form active metabolites. Displays broad substrate specificity for small phenolic compounds. Plays an important role in the sulfonation of endogenous molecules such as steroid hormones. Mediates also the metabolic activation of carcinogenic N-hydroxyarylamines leading to highly reactive intermediates capable of forming DNA adducts, potentially resulting in mutagenesis. May play a role in gut microbiota-host metabolic interaction. O-sulfonates 4-ethylphenol (4-EP), a dietary tyrosine-derived metabolite produced by gut bacteria. The product 4-EPS crosses the blood-brain barrier and may negatively regulate oligodendrocyte maturation and myelination, affecting the functional connectivity of different brain regions associated with the limbic system. Catalyzes the sulfate conjugation of dopamine. Catalyzes the sulfation of T4 (L-thyroxine/3,5,3',5'-tetraiodothyronine), T3 (3,5,3'-triiodothyronine), rT3 (3,3',5'-triiodothyronine) and 3,3'-T2 (3,3'-diiodothyronine), with a substrate preference of 3,3'-T2 &gt; rT3 &gt; T3 &gt; T4. The polypeptide is Sulfotransferase 1A1 (SULT1A1) (Macaca fascicularis (Crab-eating macaque)).